Here is a 374-residue protein sequence, read N- to C-terminus: Guanine nucleotide-binding protein subunit alpha-15 (374 aa).

The G-alpha domain occupies glutamate 41–leucine 374. The tract at residues lysine 44 to threonine 57 is G1 motif. GTP contacts are provided by residues glycine 49–serine 56, leucine 183–threonine 189, aspartate 208–glutamine 212, asparagine 277–aspartate 280, and alanine 346. Mg(2+)-binding residues include serine 56 and threonine 189. The segment at aspartate 181 to threonine 189 is G2 motif. The tract at residues leucine 204–arginine 213 is G3 motif. The segment at isoleucine 273–aspartate 280 is G4 motif. The G5 motif stretch occupies residues threonine 344–threonine 349.

It belongs to the G-alpha family. G(q) subfamily. G proteins are composed of 3 units; alpha, beta and gamma. The alpha chain contains the guanine nucleotide binding site. Expressed primarily in hematopoietic cells. Coexpressed with EDG6 at the same relative levels in all tissues examined, with the highest levels in adult spleen and lung.

Functionally, guanine nucleotide-binding proteins (G proteins) are involved as modulators or transducers in various transmembrane signaling systems. The polypeptide is Guanine nucleotide-binding protein subunit alpha-15 (Gna15) (Mus musculus (Mouse)).